The sequence spans 271 residues: Formamidopyrimidine-DNA glycosylase (271 aa).

Catalysis depends on Pro-2, which acts as the Schiff-base intermediate with DNA. Glu-3 functions as the Proton donor in the catalytic mechanism. Lys-58 (proton donor; for beta-elimination activity) is an active-site residue. 2 residues coordinate DNA: Arg-110 and Arg-152. Residues Ala-237–Lys-271 form an FPG-type zinc finger. Arg-261 functions as the Proton donor; for delta-elimination activity in the catalytic mechanism.

The protein belongs to the FPG family. In terms of assembly, monomer. The cofactor is Zn(2+).

The catalysed reaction is Hydrolysis of DNA containing ring-opened 7-methylguanine residues, releasing 2,6-diamino-4-hydroxy-5-(N-methyl)formamidopyrimidine.. It catalyses the reaction 2'-deoxyribonucleotide-(2'-deoxyribose 5'-phosphate)-2'-deoxyribonucleotide-DNA = a 3'-end 2'-deoxyribonucleotide-(2,3-dehydro-2,3-deoxyribose 5'-phosphate)-DNA + a 5'-end 5'-phospho-2'-deoxyribonucleoside-DNA + H(+). Its function is as follows. Involved in base excision repair of DNA damaged by oxidation or by mutagenic agents. Acts as a DNA glycosylase that recognizes and removes damaged bases. Has a preference for oxidized purines, such as 7,8-dihydro-8-oxoguanine (8-oxoG). Has AP (apurinic/apyrimidinic) lyase activity and introduces nicks in the DNA strand. Cleaves the DNA backbone by beta-delta elimination to generate a single-strand break at the site of the removed base with both 3'- and 5'-phosphates. This chain is Formamidopyrimidine-DNA glycosylase, found in Geobacter sulfurreducens (strain ATCC 51573 / DSM 12127 / PCA).